The following is a 134-amino-acid chain: Methylglyoxal synthase (134 aa).

An MGS-like domain is found at 1–134; it reads MHIALIAHDE…DWRDLRRNDE (134 aa). Substrate-binding positions include His8, Lys12, 34-37, and 54-55; these read TGTT and SG. The active-site Proton donor/acceptor is the Asp60. Residue His87 coordinates substrate.

It belongs to the methylglyoxal synthase family.

The enzyme catalyses dihydroxyacetone phosphate = methylglyoxal + phosphate. In terms of biological role, catalyzes the formation of methylglyoxal from dihydroxyacetone phosphate. The protein is Methylglyoxal synthase of Listeria welshimeri serovar 6b (strain ATCC 35897 / DSM 20650 / CCUG 15529 / CIP 8149 / NCTC 11857 / SLCC 5334 / V8).